Here is a 406-residue protein sequence, read N- to C-terminus: MLEELKYLSETPGIGGRIKVKPEDFIVREIIPKSIFKGNCQIYLMKKRNWETIAAIKEIAKRIGIHYSEIGFAGTKDRHAVTYQYISVCRDVRKEVEKLKIRDVELKFVGYGRPLKLGFLLGNFFLIRVRDVKRPELIPKIIEELKIKGGFPNYFGIQRFGEKRSVNHIVGKLLLEGKYEEAAEVFLGYPGNGMEGDEARKRFLETKDVDLALEEFPKFLRYERAMLYRYRETRSWKKAFLVLPRPILRIFIHAFQAYLFNLYLSRRIEEGLPLNEAIPGDIVVQVKRGIPLRTRTYRVTETNVDFVNEKIKRGEAMVSGPIFGYSYRKAHGIPGRLEEEILDENEVNVEMFKKLPKPMREPGGRRELLIKPRKFAYKRKEEEVLFKFFLPKGVYATSVLREITKH.

The active-site Nucleophile is aspartate 77. The TRUD domain occupies 150 to 371 (GFPNYFGIQR…PGGRRELLIK (222 aa)).

The protein belongs to the pseudouridine synthase TruD family.

It catalyses the reaction uridine(13) in tRNA = pseudouridine(13) in tRNA. Functionally, could be responsible for synthesis of pseudouridine from uracil-13 in transfer RNAs. This chain is Probable tRNA pseudouridine synthase D, found in Pyrococcus abyssi (strain GE5 / Orsay).